We begin with the raw amino-acid sequence, 98 residues long: MENVNTFLEKVLYMEEDRGIADPPLDSLLSRSGSKYGLVIYAAKRARQIDQYYIDLHEGSFYAHVGPLVSVDADDKSLTVAMREIAEDKLDLKSSAAE.

Belongs to the RNA polymerase subunit omega family. As to quaternary structure, the RNAP catalytic core consists of 2 alpha, 1 beta, 1 beta' and 1 omega subunit. When a sigma factor is associated with the core the holoenzyme is formed, which can initiate transcription.

The enzyme catalyses RNA(n) + a ribonucleoside 5'-triphosphate = RNA(n+1) + diphosphate. Promotes RNA polymerase assembly. Latches the N- and C-terminal regions of the beta' subunit thereby facilitating its interaction with the beta and alpha subunits. The protein is DNA-directed RNA polymerase subunit omega of Tropheryma whipplei (strain Twist) (Whipple's bacillus).